A 478-amino-acid polypeptide reads, in one-letter code: Ribosomal RNA small subunit methyltransferase F (478 aa).

Residues 123–129 (AAAPGSK), E147, D174, and D192 each bind S-adenosyl-L-methionine. The active-site Nucleophile is the C245.

The protein belongs to the class I-like SAM-binding methyltransferase superfamily. RsmB/NOP family.

Its subcellular location is the cytoplasm. It carries out the reaction cytidine(1407) in 16S rRNA + S-adenosyl-L-methionine = 5-methylcytidine(1407) in 16S rRNA + S-adenosyl-L-homocysteine + H(+). Specifically methylates the cytosine at position 1407 (m5C1407) of 16S rRNA. The protein is Ribosomal RNA small subunit methyltransferase F of Vibrio campbellii (strain ATCC BAA-1116).